The sequence spans 202 residues: Secreted RxLR effector protein 93 (202 aa).

Positions 1–16 (MRFYLTKLFAAAGALA) are cleaved as a signal peptide. A disordered region spans residues 29-58 (TPVSPLSRSSDHHQSDDSTQRRLRTLNGAD). Residues 37–48 (SSDHHQSDDSTQ) show a composition bias toward basic and acidic residues. Positions 49–61 (RRLRTLNGADEER) match the RxLR-dEER motif.

Belongs to the RxLR effector family.

It localises to the secreted. The protein localises to the host nucleus. Its function is as follows. Secreted effector that completely suppresses the host cell death induced by cell death-inducing proteins. This Plasmopara viticola (Downy mildew of grapevine) protein is Secreted RxLR effector protein 93.